A 101-amino-acid polypeptide reads, in one-letter code: Urease subunit beta (101 aa).

It belongs to the urease beta subunit family. As to quaternary structure, heterotrimer of UreA (gamma), UreB (beta) and UreC (alpha) subunits. Three heterotrimers associate to form the active enzyme.

It is found in the cytoplasm. It catalyses the reaction urea + 2 H2O + H(+) = hydrogencarbonate + 2 NH4(+). It participates in nitrogen metabolism; urea degradation; CO(2) and NH(3) from urea (urease route): step 1/1. This chain is Urease subunit beta, found in Psychromonas ingrahamii (strain DSM 17664 / CCUG 51855 / 37).